Here is a 219-residue protein sequence, read N- to C-terminus: Flagellin A (219 aa).

Positions 1–12 (MKVKEFMNNKKG) are excised as a propeptide. 2 N-linked (GlcNAc...) asparagine glycosylation sites follow: N38 and N175.

It belongs to the archaeal flagellin family. Post-translationally, N-linked glycans consist of the 779 Da trisaccharide beta-ManNAc(Thr)-(1-4)-beta-GlcNAc3NAcA-(1-3)-beta-GlcNAc.

The protein resides in the archaeal flagellum. Functionally, flagellin is the subunit protein which polymerizes to form the filaments of archaeal flagella. The protein is Flagellin A (flaA) of Methanococcus voltae.